The primary structure comprises 604 residues: Glucose oxidase 2 (604 aa).

The first 16 residues, 1–16 (MKLLGLLSGLVVVATA), serve as a signal peptide directing secretion. Residues L49 and T50 each contribute to the FAD site. N63 carries N-linked (GlcNAc...) asparagine glycosylation. E70 is an FAD binding site. N109 is a glycosylation site (N-linked (GlcNAc...) asparagine). FAD contacts are provided by S123, N127, G128, and S130. Cysteines 184 and 226 form a disulfide. N214 is a glycosylation site (N-linked (GlcNAc...) asparagine). V270 contacts FAD. N-linked (GlcNAc...) asparagine glycosylation is found at N375, N408, and N517. H536 (proton acceptor) is an active-site residue. O2 contacts are provided by R557 and V558. Positions 569 and 581 each coordinate FAD. N600 carries an N-linked (GlcNAc...) asparagine glycan.

It belongs to the GMC oxidoreductase family. In terms of assembly, homodimer. The cofactor is FAD.

The protein localises to the secreted. It is found in the cell wall. It localises to the cytoplasm. Its subcellular location is the extracellular space. The protein resides in the extracellular matrix. It carries out the reaction beta-D-glucose + O2 = D-glucono-1,5-lactone + H2O2. Glucose oxidase catalyzes the oxidation of beta-D-glucose to D-glucono-delta-lactone and hydrogen peroxide in the presence of molecular oxygen. D-glucono-delta-lactone is sequentially hydrolyzed by lactonase to D-gluconic acid, and the resulting hydrogen peroxide is hydrolyzed by catalase to oxygen and water. Acts as a key factor contributing to fungal disease of apple. The production of gluconic acid leads to host tissue acidification that enhances the expression of pectolytic enzymes and the establishment of conditions for necrotrophic development of P.expansum. This chain is Glucose oxidase 2, found in Penicillium expansum (Blue mold rot fungus).